The chain runs to 307 residues: Mitochondrial glycine transporter (307 aa).

3 Solcar repeats span residues 8-87 (PRNS…MRSS), 115-199 (LTMY…SKQL), and 221-305 (TSTT…LVKR). 6 consecutive transmembrane segments (helical) span residues 14 to 39 (LIGG…TRIQ), 62 to 88 (GTLP…RSSL), 121 to 146 (LLTG…VRYE), 174 to 197 (GFGA…EKSK), 225 to 251 (VNTT…KTRM), and 280 to 298 (GLSM…AWGI).

It belongs to the mitochondrial carrier (TC 2.A.29) family. SLC25A38 subfamily.

The protein localises to the mitochondrion. It is found in the mitochondrion inner membrane. The catalysed reaction is glycine(in) = glycine(out). Functionally, mitochondrial glycine transporter that imports glycine into the mitochondrial matrix. Plays an important role in providing glycine for the first enzymatic step in heme biosynthesis, the condensation of glycine with succinyl-CoA to produce 5-aminolevulinate (ALA) in the mitochondrial matrix. The chain is Mitochondrial glycine transporter from Saccharomyces cerevisiae (strain ATCC 204508 / S288c) (Baker's yeast).